A 424-amino-acid polypeptide reads, in one-letter code: MKLEMICTGEEVLAGQIVDTNAAWFANTLIERGVECQRRITVGDRLEDLVAVFKERSTEADVIMVNGGLGPTSDDLSTEAMALALGVPLVENKEWRSKLEAWFAKNARVMAESNLKQALLPQGAIMIDNPVGTACGFAIKLNQAWLFFTPGVPFEFKRMVKEQFIPFIEEHFPLSEPVSVKKLLTLGHGESALADKLEVIPLPKGVTLGYRSYMPYIEIKLFARGQLAIDSLATIETEVKKILGHSVVAEDITTLDQEIHNSLVNSGFSLSVAESCTGGLIASGLVAFAGSSAYLHQGLVTYSNEAKVKVLGVNPQTLDDYGAVSIATVEEMAKGARGILDSDYALATSGIAGPDGGSDEKPVGTVAIALATKYGVYSQMLKLPSRSRALVRSLGTAIAYDMLRRELLGEAVIVDYSSFSRFSK.

This sequence belongs to the CinA family.

The chain is CinA-like protein from Shewanella woodyi (strain ATCC 51908 / MS32).